Reading from the N-terminus, the 179-residue chain is MPRINIGLTDEQRQGVINLLNQDLADSYLLLVKTKKYHWDVVGPQFRSLHQLWEEHYEKLTENIDAIAERVRTLGGYPIGSMEGFLQLATLKEHAGDVPSATGMVANLVQDHEQLIRNLRDHVDRSGDEFQDQGTADFLTGLMEEHEEIAWMLRSFIEGQPIEPNGTQPATETKTPVGV.

The disordered stretch occupies residues 160 to 179 (QPIEPNGTQPATETKTPVGV). Residues 165 to 179 (NGTQPATETKTPVGV) are compositionally biased toward polar residues.

It belongs to the Dps family.

This is an uncharacterized protein from Anabaena variabilis.